The chain runs to 425 residues: Glucan endo-1,3-beta-glucosidase 10 (425 aa).

Positions 1 to 26 (MASSSLQSLFSLFCLALFSLPLIVSS) are cleaved as a signal peptide. The active-site Proton donor is the E119. N124 carries N-linked (GlcNAc...) asparagine glycosylation. E266 serves as the catalytic Nucleophile. Residues 347–387 (GIKTSSTHSSGSGSSNSTGGSSSGGGGNTGGSSSGGGIYQP) are disordered. Residues 350-366 (TSSTHSSGSGSSNSTGG) show a composition bias toward low complexity. N-linked (GlcNAc...) asparagine glycosylation is present at N362. A compositionally biased stretch (gly residues) spans 367–384 (SSSGGGGNTGGSSSGGGI). The GPI-anchor amidated serine moiety is linked to residue S401. Positions 402–425 (AGGKGRFVECVLFFFLLCIIKLRL) are cleaved as a propeptide — removed in mature form.

Belongs to the glycosyl hydrolase 17 family. Highly expressed in flowers and siliques.

It is found in the cell membrane. Its subcellular location is the cell junction. It localises to the plasmodesma. The catalysed reaction is Hydrolysis of (1-&gt;3)-beta-D-glucosidic linkages in (1-&gt;3)-beta-D-glucans.. Plasmodesmal-associated membrane beta-1,3-glucanase involved in plasmodesmal callose degradation and functions in the gating of plasmodesmata. The polypeptide is Glucan endo-1,3-beta-glucosidase 10 (Arabidopsis thaliana (Mouse-ear cress)).